Consider the following 72-residue polypeptide: Translation initiation factor IF-1 (72 aa).

The 72-residue stretch at 1–72 (MAKEGAIEVE…TRGRIVYRYK (72 aa)) folds into the S1-like domain.

The protein belongs to the IF-1 family. Component of the 30S ribosomal translation pre-initiation complex which assembles on the 30S ribosome in the order IF-2 and IF-3, IF-1 and N-formylmethionyl-tRNA(fMet); mRNA recruitment can occur at any time during PIC assembly.

Its subcellular location is the cytoplasm. In terms of biological role, one of the essential components for the initiation of protein synthesis. Stabilizes the binding of IF-2 and IF-3 on the 30S subunit to which N-formylmethionyl-tRNA(fMet) subsequently binds. Helps modulate mRNA selection, yielding the 30S pre-initiation complex (PIC). Upon addition of the 50S ribosomal subunit IF-1, IF-2 and IF-3 are released leaving the mature 70S translation initiation complex. This chain is Translation initiation factor IF-1, found in Corynebacterium efficiens (strain DSM 44549 / YS-314 / AJ 12310 / JCM 11189 / NBRC 100395).